We begin with the raw amino-acid sequence, 125 residues long: Large ribosomal subunit protein bL12 (125 aa).

It belongs to the bacterial ribosomal protein bL12 family. As to quaternary structure, homodimer. Part of the ribosomal stalk of the 50S ribosomal subunit. Forms a multimeric L10(L12)X complex, where L10 forms an elongated spine to which 2 to 4 L12 dimers bind in a sequential fashion. Binds GTP-bound translation factors.

In terms of biological role, forms part of the ribosomal stalk which helps the ribosome interact with GTP-bound translation factors. Is thus essential for accurate translation. The polypeptide is Large ribosomal subunit protein bL12 (Cereibacter sphaeroides (strain ATCC 17023 / DSM 158 / JCM 6121 / CCUG 31486 / LMG 2827 / NBRC 12203 / NCIMB 8253 / ATH 2.4.1.) (Rhodobacter sphaeroides)).